A 708-amino-acid polypeptide reads, in one-letter code: Capsid scaffolding protein (708 aa).

Residues H63, S132, and H157 each act as charge relay system in the active site. 3 disordered regions span residues S270–P339, H455–R565, and A593–E620. A compositionally biased stretch (low complexity) spans P284–S293. Over residues S294–P311 the composition is skewed to pro residues. The span at S326–P339 shows a compositional bias: low complexity. Positions A333–G352 are interaction with pAP. The segment covering K498–K513 has biased composition (basic residues). 2 consecutive short sequence motifs (nuclear localization signal) follow at residues K510–T515 and R537–K543. Low complexity predominate over residues A593 to T615. Residues P688–E708 are interaction with major capsid protein.

Belongs to the herpesviridae capsid scaffolding protein family. Homomultimer. Interacts with major capsid protein. In terms of assembly, exists in a monomer-dimer equilibrium with the dimer being the active species. Capsid scaffolding protein is cleaved by assemblin after formation of the spherical procapsid. As a result, the capsid obtains its mature, icosahedral shape. Cleavages occur at two or more sites: release (R-site) and maturation (M-site).

The protein localises to the host cytoplasm. Its subcellular location is the host nucleus. It catalyses the reaction Cleaves -Ala-|-Ser- and -Ala-|-Ala- bonds in the scaffold protein.. Acts as a scaffold protein by binding major capsid protein in the cytoplasm, inducing the nuclear localization of both proteins. Multimerizes in the nucleus such as major capsid protein forms the icosahedral T=16 capsid. Autocatalytic cleavage releases the assembly protein, and subsequently abolishes interaction with major capsid protein. Cleavages products are evicted from the capsid before or during DNA packaging. Its function is as follows. Protease that plays an essential role in virion assembly within the nucleus. Catalyzes the cleavage of the assembly protein after formation of the spherical procapsid. By that cleavage, the capsid matures and gains its icosahedral shape. The cleavage sites seem to include -Ala-Ser-, -Ala-Ala-, as well as Ala-Thr bonds. Assemblin and cleavages products are evicted from the capsid before or during DNA packaging. Functionally, plays a major role in capsid assembly. Acts as a scaffold protein by binding major capsid protein. Multimerizes in the nucleus such as major capsid protein forms the icosahedral T=16 capsid. Cleaved by assemblin after capsid completion. The cleavages products are evicted from the capsid before or during DNA packaging. The chain is Capsid scaffolding protein (UL80) from Homo sapiens (Human).